Reading from the N-terminus, the 101-residue chain is Small ribosomal subunit protein uS14 (101 aa).

Belongs to the universal ribosomal protein uS14 family. Part of the 30S ribosomal subunit. Contacts proteins S3 and S10.

Binds 16S rRNA, required for the assembly of 30S particles and may also be responsible for determining the conformation of the 16S rRNA at the A site. This is Small ribosomal subunit protein uS14 from Shewanella amazonensis (strain ATCC BAA-1098 / SB2B).